We begin with the raw amino-acid sequence, 354 residues long: MGRLLGVGLLGDRWRSWGERLLALRNRLKASREVESVDLPNCHLIKGIEAGADDIDILPNGLAFFSVGLKCPGLHSFSPDKPGGILMMDLKKENPRALELRISRGFNLASFNPHGISTFIDSDDTVYLFVVNHPEFKNTVEIFKFEEEENSLLHLKTIKHELLPSVNDIIAVGPAHFYATNDHYFSDPFLKYLETYLNLHWANVVYYSPDEVKVVAEGFDAANGINISPDKKYIYVADILAHEIHVLEKHPNMNLTQLKVLKLDTLVDNLSIDPSSGDILVGCHPNGQKLFIYDPNNPPSSEVLRIQNILCEKPTVTTVYANNGSVLQGSSVASVYDRKLLIGTLYHRALYCEL.

Cys42 and Cys352 form a disulfide bridge. The Ca(2+) site is built by Asp53 and Asp54. The active-site Proton acceptor is the His114. Residues Ile116, Asn167, Asp168, and Asn223 each coordinate Ca(2+). N-linked (GlcNAc...) asparagine glycosylation is present at Asn254. Ca(2+) contacts are provided by Asp268 and Asn269. Residues Asn269 and Asn323 are each glycosylated (N-linked (GlcNAc...) asparagine).

The protein belongs to the paraoxonase family. In terms of assembly, homotrimer. Ca(2+) is required as a cofactor. In terms of processing, glycosylated. Post-translationally, the signal sequence is not cleaved.

The protein resides in the membrane. The enzyme catalyses a phenyl acetate + H2O = a phenol + acetate + H(+). It carries out the reaction an N-acyl-L-homoserine lactone + H2O = an N-acyl-L-homoserine + H(+). Capable of hydrolyzing lactones and a number of aromatic carboxylic acid esters. This chain is Serum paraoxonase/arylesterase 2 (PON2), found in Canis lupus familiaris (Dog).